The following is a 511-amino-acid chain: GMP synthase [glutamine-hydrolyzing] (511 aa).

One can recognise a Glutamine amidotransferase type-1 domain in the interval 5-195; that stretch reads DILVLDFGSQ…AKYACNCDSV (191 aa). Cys82 (nucleophile) is an active-site residue. Catalysis depends on residues His169 and Glu171. Positions 196–386 constitute a GMPS ATP-PPase domain; it reads WNMGSFAKTQ…LGLSKDVVYR (191 aa). An ATP-binding site is contributed by 223–229; it reads SGGVDSS.

Homodimer.

The enzyme catalyses XMP + L-glutamine + ATP + H2O = GMP + L-glutamate + AMP + diphosphate + 2 H(+). The protein operates within purine metabolism; GMP biosynthesis; GMP from XMP (L-Gln route): step 1/1. In terms of biological role, catalyzes the synthesis of GMP from XMP. The sequence is that of GMP synthase [glutamine-hydrolyzing] from Campylobacter lari (strain RM2100 / D67 / ATCC BAA-1060).